A 196-amino-acid chain; its full sequence is Imidazoleglycerol-phosphate dehydratase (196 aa).

This sequence belongs to the imidazoleglycerol-phosphate dehydratase family.

It localises to the cytoplasm. It catalyses the reaction D-erythro-1-(imidazol-4-yl)glycerol 3-phosphate = 3-(imidazol-4-yl)-2-oxopropyl phosphate + H2O. It participates in amino-acid biosynthesis; L-histidine biosynthesis; L-histidine from 5-phospho-alpha-D-ribose 1-diphosphate: step 6/9. The chain is Imidazoleglycerol-phosphate dehydratase from Clostridium botulinum (strain Kyoto / Type A2).